The primary structure comprises 314 residues: Cytochrome f (314 aa).

An N-terminal signal peptide occupies residues 1 to 30 (MATNKFFKSLLFALTIAINSFGFCIQDAVA). The heme site is built by Tyr31, Cys51, Cys54, and His55. The helical transmembrane segment at 280-300 (IYGYLAFCFSVLITQIMLVLK) threads the bilayer.

Belongs to the cytochrome f family. In terms of assembly, the 4 large subunits of the cytochrome b6-f complex are cytochrome b6, subunit IV (17 kDa polypeptide, petD), cytochrome f and the Rieske protein, while the 4 small subunits are PetG, PetL, PetM and PetN. The complex functions as a dimer. Heme is required as a cofactor.

It is found in the plastid. The protein localises to the chloroplast thylakoid membrane. Functionally, component of the cytochrome b6-f complex, which mediates electron transfer between photosystem II (PSII) and photosystem I (PSI), cyclic electron flow around PSI, and state transitions. The sequence is that of Cytochrome f from Phaeodactylum tricornutum (strain CCAP 1055/1).